The chain runs to 400 residues: Elongation factor Tu (400 aa).

In terms of domain architecture, tr-type G spans 10 to 209 (KPHVNIGTIG…AVDKYIPTPQ (200 aa)). The interval 19–26 (GHVDHGKT) is G1. 19–26 (GHVDHGKT) contacts GTP. T26 is a binding site for Mg(2+). The tract at residues 60–64 (GITIN) is G2. A G3 region spans residues 81 to 84 (DCPG). GTP contacts are provided by residues 81-85 (DCPGH) and 136-139 (NKVD). The segment at 136-139 (NKVD) is G4. The tract at residues 174–176 (SAL) is G5.

This sequence belongs to the TRAFAC class translation factor GTPase superfamily. Classic translation factor GTPase family. EF-Tu/EF-1A subfamily. Monomer.

The protein resides in the cytoplasm. It catalyses the reaction GTP + H2O = GDP + phosphate + H(+). Its function is as follows. GTP hydrolase that promotes the GTP-dependent binding of aminoacyl-tRNA to the A-site of ribosomes during protein biosynthesis. The protein is Elongation factor Tu of Caldicellulosiruptor bescii (strain ATCC BAA-1888 / DSM 6725 / KCTC 15123 / Z-1320) (Anaerocellum thermophilum).